Here is a 378-residue protein sequence, read N- to C-terminus: Acyl-coenzyme A diphosphatase NUDT19 (378 aa).

The Nudix hydrolase domain occupies 7-258; that stretch reads HWREAASVLL…EIWLAPPQFY (252 aa). The short motif at 105-126 is the Nudix box element; sequence SPLPGEVAFRICAIRETFEEAG. Residues Glu-120 and Glu-124 each contribute to the Mg(2+) site. A Microbody targeting signal motif is present at residues 376–378; it reads SRL.

Belongs to the Nudix hydrolase family. In terms of assembly, monomer. Mg(2+) serves as cofactor. It depends on Mn(2+) as a cofactor.

It is found in the peroxisome. It carries out the reaction an acyl-CoA + H2O = an acyl-4'-phosphopantetheine + adenosine 3',5'-bisphosphate + 2 H(+). The catalysed reaction is CoA + H2O = (R)-4'-phosphopantetheine + adenosine 3',5'-bisphosphate + 2 H(+). It catalyses the reaction hexanoyl-CoA + H2O = hexanoyl-4'-phosphopantetheine + adenosine 3',5'-bisphosphate + 2 H(+). The enzyme catalyses octanoyl-CoA + H2O = S-octanoyl-4'-phosphopantetheine + adenosine 3',5'-bisphosphate + 2 H(+). It carries out the reaction butanoyl-CoA + H2O = S-butanoyl-4'-phosphopantetheine + adenosine 3',5'-bisphosphate + 2 H(+). The catalysed reaction is propanoyl-CoA + H2O = propanoyl-4'-phosphopantetheine + adenosine 3',5'-bisphosphate + 2 H(+). It catalyses the reaction malonyl-CoA + H2O = malonyl-4'-phosphopantetheine + adenosine 3',5'-bisphosphate + 2 H(+). The enzyme catalyses succinyl-CoA + H2O = succinyl-4'-phosphopantetheine + adenosine 3',5'-bisphosphate + 2 H(+). It carries out the reaction choloyl-CoA + H2O = S-choloyl-4'-phosphopantetheine + adenosine 3',5'-bisphosphate + 2 H(+). The catalysed reaction is 4,8-dimethylnonanoyl-CoA + H2O = S-(4,8-dimethylnonanoyl)-4'-phosphopantetheine + adenosine 3',5'-bisphosphate + 2 H(+). It catalyses the reaction (9Z,12Z,15Z)-octadecatrienoyl-CoA + H2O = S-(9Z,12Z,15Z-octadecatrienoyl)-4'-phosphopantetheine + adenosine 3',5'-bisphosphate + 2 H(+). The enzyme catalyses (9Z,12Z)-octadecadienoyl-CoA + H2O = S-(9Z,12Z-octadecadienoyl)-4'-phosphopantetheine + adenosine 3',5'-bisphosphate + 2 H(+). It carries out the reaction (9Z)-hexadecenoyl-CoA + H2O = S-(9Z-hexadecenoyl)-4'-phosphopantetheine + adenosine 3',5'-bisphosphate + 2 H(+). The catalysed reaction is (9Z)-tetradecenoyl-CoA + H2O = S-(9Z-tetradecenoyl)-4'-phosphopantetheine + adenosine 3',5'-bisphosphate + 2 H(+). It catalyses the reaction (6Z)-octenoyl-CoA + H2O = S-(6Z-octenoyl)-4'-phosphopantetheine + adenosine 3',5'-bisphosphate + 2 H(+). The enzyme catalyses hexadecanoyl-CoA + H2O = S-hexadecanoyl-4'-phosphopantetheine + adenosine 3',5'-bisphosphate + 2 H(+). It carries out the reaction tetradecanoyl-CoA + H2O = tetradecanoyl-4'-phosphopantetheine + adenosine 3',5'-bisphosphate + 2 H(+). The catalysed reaction is dodecanoyl-CoA + H2O = S-dodecanoyl-4'-phosphopantetheine + adenosine 3',5'-bisphosphate + 2 H(+). It catalyses the reaction a 5'-end CoA-ribonucleoside in mRNA + H2O = a 5'-end phospho-adenosine-phospho-ribonucleoside in mRNA + (R)-4'-phosphopantetheine + 2 H(+). In terms of biological role, fatty acyl-coenzyme A (CoA) diphosphatase that hydrolyzes fatty acyl-CoA to yield acyl-4'-phosphopantetheine and adenosine 3',5'-bisphosphate. Mediates the hydrolysis of a wide range of CoA esters, including choloyl-CoA and branched-chain fatty-acyl-CoA esters and at low substrate concentrations medium and long-chain fatty-acyl-CoA esters are the primary substrates. Highest activity seen with medium-chain acyl-CoA esters and higher rates of activity seen with the unsaturated acyl-CoA esters compared with the saturated esters. Exhibits decapping activity towards dpCoA-capped RNAs in vitro. The sequence is that of Acyl-coenzyme A diphosphatase NUDT19 (NUDT19) from Gallus gallus (Chicken).